Consider the following 1016-residue polypeptide: MAESSDKLYRVEYAKSGRASCKKCKESIPKDSIRMAFMVESPMFDGKIPHWYHLSCFWKVGFSIWHPDVEVEGFSELRWDDQQTIKKMAETGGRTDVSGKGQDGVGSKTEKTLIDFGAGYAKSNRSTCKSCMEKIDKGQVRLSKKVVYPDKPQLGMVDCWYHPKCFVQKREELGFRPEFSATHLMGFSVLTAEDQETLKKQLPAIKGERKRKGDEVDGIDEVTKKKSKKEKDKEIKLEKALKAQNDLIWNVKDELKKACSTNDLKELLIFNKQEVPSGESAILDRVADGMVFGALLPCEECSGQLVFKGDAYYCTGDVTAWTKCMVKTQTPNRKEWVTPKEFREISYFKKLKIKKQDRIFPPESSTPVGAAAPPSAASAPAAVHSGPPDKPLSNMKILTLGKLSQNKDEVKATIEKLGGKLTGTANKASLCISTKKEVDKLNKKMEEVKEANIRVVSEDFLQDISASTKSLQELLSTHLLSPWGAEVKVEPVEAVGPKGKSGAAPSKKSKGPVKEEGTNKSEKRMKLTLKGGAAVDPDSGLEHNAHVLEKGGKVFSATLGLVDIVKGTNSYYKLQLLEDDKESRYWIFRSWGRVGTVIGSNKLEQMPSKEDAIEHFMKLYEEKTGNAWHSKNFTKHPKKFYPLEIDYGQDEEAVKKLTVNPGTKSKLPKPVQNLIKMIFDVESMKKAMVEYEIDLQKMPLGKLSKRQIQAAYSILSEVQQALSQGSSDSHILDLSNRFYTLIPHDFGMKKPPLLNNANSVQAKVEMLDNLLDIEVAYSLLRGGSDDSSKDPIDVNYEKLKTDIKVVDKDSEEAEIIRKYVKNTHATTHNAYDLEVVDIFKIEREGESQRYKPFKQLHNRRLLWHGSRTTNFAGILSQGLRIAPPEAPVTGYMFGKGIYFADMVSKSANYCHTSQGDPIGLILLGEAALGNMYELKHARHISKLPKGKHSVKGLGKTTPDPSASITVDGVEVPLGTGISSGVNDTCLLYNEYIVYDIAQVHLKYLLKLKFNFKTSLW.

An N-acetylalanine modification is found at A2. The PARP-type 1 zinc-finger motif lies at 9–93 (YRVEYAKSGR…TIKKMAETGG (85 aa)). C21 and C24 together coordinate Zn(2+). S41 bears the Phosphoserine mark. H53 and C56 together coordinate Zn(2+). Residues K100 and K108 each carry the N6-acetyllysine modification. The PARP-type 2 zinc-finger motif lies at 116–206 (FGAGYAKSNR…TLKKQLPAIK (91 aa)). C128 and C131 together coordinate Zn(2+). The residue at position 134 (K134) is an N6-acetyllysine. H162 and C165 together coordinate Zn(2+). 2 positions are modified to phosphoserine: S180 and S188. K206 participates in a covalent cross-link: Glycyl lysine isopeptide (Lys-Gly) (interchain with G-Cter in SUMO1); alternate. K206 is covalently cross-linked (Glycyl lysine isopeptide (Lys-Gly) (interchain with G-Cter in SUMO2); alternate). 2 consecutive short sequence motifs (nuclear localization signal) follow at residues 210 to 212 (KRK) and 224 to 229 (KKKSKK). In terms of domain architecture, PADR1 zinc-binding spans 228 to 362 (KKEKDKEIKL…IKKQDRIFPP (135 aa)). Residue K252 forms a Glycyl lysine isopeptide (Lys-Gly) (interchain with G-Cter in SUMO2) linkage. Phosphoserine is present on residues S277 and S280. The zinc ribbon stretch occupies residues 293-335 (GALLPCEECSGQLVFKGDAYYCTGDVTAWTKCMVKTQTPNRKE). Residues C298, C301, C314, and C324 each contribute to the Zn(2+) site. The tract at residues 360 to 390 (FPPESSTPVGAAAPPSAASAPAAVHSGPPDK) is disordered. The segment covering 365–386 (STPVGAAAPPSAASAPAAVHSG) has biased composition (low complexity). The automodification domain stretch occupies residues 376–526 (AASAPAAVHS…GTNKSEKRMK (151 aa)). The BRCT domain maps to 387-478 (PPDKPLSNMK…KSLQELLSTH (92 aa)). D389 is modified (polyADP-ribosyl aspartic acid). 7 positions are modified to polyADP-ribosyl glutamic acid: E409, E415, E437, E446, E447, E450, and E458. K469 is covalently cross-linked (Glycyl lysine isopeptide (Lys-Gly) (interchain with G-Cter in SUMO2)). PolyADP-ribosyl glutamic acid is present on residues E473 and E486. A Glycyl lysine isopeptide (Lys-Gly) (interchain with G-Cter in SUMO1); alternate cross-link involves residue K488. Residue K488 forms a Glycyl lysine isopeptide (Lys-Gly) (interchain with G-Cter in SUMO2); alternate linkage. Residues E490 and E493 each carry the polyADP-ribosyl glutamic acid modification. The segment at 494–523 (AVGPKGKSGAAPSKKSKGPVKEEGTNKSEK) is disordered. Positions 496-506 (GPKGKSGAAPS) are enriched in low complexity. S501, S506, and S509 each carry ADP-ribosylserine. Residues 512–523 (PVKEEGTNKSEK) show a composition bias toward basic and acidic residues. K514 is covalently cross-linked (Glycyl lysine isopeptide (Lys-Gly) (interchain with G-Cter in SUMO2)). PolyADP-ribosyl glutamic acid occurs at positions 515 and 516. At S521 the chain carries ADP-ribosylserine. E522 carries the post-translational modification PolyADP-ribosyl glutamic acid. K523 is subject to N6-(ADP-ribosyl)lysine. Residue K530 forms a Glycyl lysine isopeptide (Lys-Gly) (interchain with G-Cter in SUMO2) linkage. One can recognise a WGR domain in the interval 544-640 (NAHVLEKGGK…KNFTKHPKKF (97 aa)). The residue at position 596 (T596) is a Phosphothreonine. K602 and K623 each carry N6-acetyllysine. In terms of domain architecture, PARP alpha-helical spans 664 to 781 (KSKLPKPVQN…DIEVAYSLLR (118 aa)). K750 participates in a covalent cross-link: Glycyl lysine isopeptide (Lys-Gly) (interchain with G-Cter in SUMO1); alternate. A Glycyl lysine isopeptide (Lys-Gly) (interchain with G-Cter in SUMO2); alternate cross-link involves residue K750. S784 and S788 each carry phosphoserine. The region spanning 790 to 1016 (DPIDVNYEKL…LKFNFKTSLW (227 aa)) is the PARP catalytic domain. NAD(+) is bound by residues 864–866 (HGS), G873, R880, and S906. The active-site For poly [ADP-ribose] polymerase activity is E990.

Belongs to the ARTD/PARP family. In terms of assembly, homodimer; PARP-type zinc-fingers from separate PARP1 molecules form a dimer module that specifically recognizes DNA strand breaks. Heterodimer; heterodimerizes with PARP2. Interacts (via the PARP catalytic domain) with HPF1. Interacts with NMNAT1. Interacts with nucleosomes; with a preference for nucleosomes containing H2A.X. Interacts with APTX. Component of a base excision repair (BER) complex, containing at least XRCC1, PARP1, PARP2, POLB and LRIG3. Interacts with SRY. The SWAP complex consists of NPM1, NCL, PARP1 and SWAP70. Interacts with TIAM2. Interacts with PARP3; leading to activate PARP1 in absence of DNA. Interacts (when poly-ADP-ribosylated) with CHD1L (via macro domain). Interacts with the DNA polymerase alpha catalytic subunit POLA1; this interaction functions as part of the control of replication fork progression. Interacts with EEF1A1 and TXK. Interacts with RNF4. Interacts with RNF146. Interacts with ZNF423. Interacts with APLF. Interacts with SNAI1 (via zinc fingers); the interaction requires SNAI1 to be poly-ADP-ribosylated and non-phosphorylated (active) by GSK3B. Interacts (when poly-ADP-ribosylated) with PARP9. Interacts with NR4A3; activates PARP1 by improving acetylation of PARP1 and suppressing the interaction between PARP1 and SIRT1. Interacts (via catalytic domain) with PUM3; the interaction inhibits the poly-ADP-ribosylation activity of PARP1 and the degradation of PARP1 by CASP3 following genotoxic stress. Interacts with ZNF365. Interacts with RRP1B. Interacts with TIMELESS; the interaction is direct. Interacts with CGAS; leading to impede the formation of the PARP1-TIMELESS complex. Interacts with KHDC3L, the interaction is increased following the formation of DNA double-strand breaks. Interacts (when auto-poly-ADP-ribosylated) with XRCC1; leading to inhibit PARP1 ADP-ribosyltransferase activity. Interacts with SPINDOC; promoting PARP1 ADP-ribosyltransferase activity. Interacts with BANF1; leading to inhibit PARP1 ADP-ribosyltransferase activity in response to oxidative DNA damage. Interacts (when sumoylated and ubiquitinated) with VCP/p97; leading to its extraction from chromatin. Interacts with YARS1; promoting PARP1 ADP-ribosyltransferase activity. Interacts with PACMP micropeptide; Interacts with PACMP micropeptide; interaction. Interacts (when poly-ADP-ribosylated) with isoform 1 of MACROH2A1; MACROH2A1 specifically binds to poly-ADP-ribose chains and inhibits PARP1 activity, limiting the consumption of nuclear NAD(+). Interacts with CARM1; promoting recruitment to replication forks. Interacts with RECQL. Interacts with ZNF32; the interaction reshapes ZNF432 interacting proteins. Interacts with TPRN; TPRN interacts with a number of DNA damage response proteins, is recruited to sites of DNA damage and may play a role in DNA damage repair. As to quaternary structure, interacts (when auto-poly-ADP-ribosylated) with AIFM1. Poly-ADP-ribosylated on serine, glutamate and aspartate residues by autocatalysis. Auto-ADP-ribosylation on serine takes place following interaction with HPF1. Auto poly-ADP-ribosylation on serine residues promotes its dissociation from chromatin. Poly-ADP-ribosylated by PARP2; poly-ADP-ribosylation mediates the recruitment of CHD1L to DNA damage sites. Mono-ADP-ribosylated at Lys-523 by SIRT6 in response to oxidative stress, promoting recruitment to double-strand breaks (DSBs) sites. Post-translationally, S-nitrosylated, leading to inhibit transcription regulation activity. In terms of processing, phosphorylated at Thr-596 by PRKDC in response to DNA damage following virus infection, promoting its translocation to the cytosol. Phosphorylated by TXK. Proteolytically cleaved by caspase-3 (CASP3) and caspase-7 (CASP7) in response to apoptosis to generate the Poly [ADP-ribose] polymerase 1, processed N-terminus and Poly [ADP-ribose] polymerase 1, processed C-terminus forms. Post-translationally, sumoylated with SUMO1 or SUMO2 by PIAS4 following prolonged residence (trapping) to chromatin. Sumoylation promotes ubiquitination by RNF4 and removal from chromatin by VCP/p97. In terms of processing, ubiquitinated by RNF4 following sumoylation by PIAS4 in response to prolonged residence (trapping) to chromatin. Ubiquitination promotes removal from chromatin by VCP/p97.

It is found in the chromosome. The protein localises to the nucleus. Its subcellular location is the nucleolus. It localises to the cytoplasm. The protein resides in the cytosol. The enzyme catalyses NAD(+) + (ADP-D-ribosyl)n-acceptor = nicotinamide + (ADP-D-ribosyl)n+1-acceptor + H(+).. The catalysed reaction is L-seryl-[protein] + NAD(+) = O-(ADP-D-ribosyl)-L-seryl-[protein] + nicotinamide + H(+). It carries out the reaction L-aspartyl-[protein] + NAD(+) = 4-O-(ADP-D-ribosyl)-L-aspartyl-[protein] + nicotinamide. It catalyses the reaction L-glutamyl-[protein] + NAD(+) = 5-O-(ADP-D-ribosyl)-L-glutamyl-[protein] + nicotinamide. The enzyme catalyses L-tyrosyl-[protein] + NAD(+) = O-(ADP-D-ribosyl)-L-tyrosyl-[protein] + nicotinamide + H(+). The catalysed reaction is L-histidyl-[protein] + NAD(+) = N(tele)-(ADP-D-ribosyl)-L-histidyl-[protein] + nicotinamide + H(+). Its activity is regulated as follows. ADP-ribosyltransferase activity is regulated via an allosteric activation mechanism. In absence of activation signal, PARP1 is autoinhibited by the PARP alpha-helical domain (also named HD region), which prevents effective NAD(+)-binding. Activity is highly stimulated by signals, such as DNA strand breaks. Binding to damaged DNA unfolds the PARP alpha-helical domain, relieving autoinhibition. Poly-ADP-ribosyltransferase activity is tightly regulated and PARP1 is removed from damaged chromatin following initial poly-ADP-ribosylation of chromatin to avoid prolonged residence (trapping) that has cytotoxic consequences. A number of factors (VCP/p97) or post-translational modifications (auto-poly-ADP-ribosylation or ubiquitination) promote PARP1 removal from chromatin. Its function is as follows. Poly-ADP-ribosyltransferase that mediates poly-ADP-ribosylation of proteins and plays a key role in DNA repair. Mediates glutamate, aspartate, serine, histidine or tyrosine ADP-ribosylation of proteins: the ADP-D-ribosyl group of NAD(+) is transferred to the acceptor carboxyl group of target residues and further ADP-ribosyl groups are transferred to the 2'-position of the terminal adenosine moiety, building up a polymer with an average chain length of 20-30 units. Serine ADP-ribosylation of proteins constitutes the primary form of ADP-ribosylation of proteins in response to DNA damage. Specificity for the different amino acids is conferred by interacting factors, such as HPF1 and NMNAT1. Following interaction with HPF1, catalyzes serine ADP-ribosylation of target proteins; HPF1 confers serine specificity by completing the PARP1 active site. Also catalyzes tyrosine ADP-ribosylation of target proteins following interaction with HPF1. Following interaction with NMNAT1, catalyzes glutamate and aspartate ADP-ribosylation of target proteins; NMNAT1 confers glutamate and aspartate specificity. PARP1 initiates the repair of DNA breaks: recognizes and binds DNA breaks within chromatin and recruits HPF1, licensing serine ADP-ribosylation of target proteins, such as histones (H2BS6ADPr and H3S10ADPr), thereby promoting decompaction of chromatin and the recruitment of repair factors leading to the reparation of DNA strand breaks. HPF1 initiates serine ADP-ribosylation but restricts the polymerase activity of PARP1 in order to limit the length of poly-ADP-ribose chains. In addition to base excision repair (BER) pathway, also involved in double-strand breaks (DSBs) repair: together with TIMELESS, accumulates at DNA damage sites and promotes homologous recombination repair by mediating poly-ADP-ribosylation. Mediates the poly-ADP-ribosylation of a number of proteins, including itself, APLF, CHFR and NFAT5. In addition to proteins, also able to ADP-ribosylate DNA: catalyzes ADP-ribosylation of DNA strand break termini containing terminal phosphates and a 2'-OH group in single- and double-stranded DNA, respectively. Required for PARP9 and DTX3L recruitment to DNA damage sites. PARP1-dependent PARP9-DTX3L-mediated ubiquitination promotes the rapid and specific recruitment of 53BP1/TP53BP1, UIMC1/RAP80, and BRCA1 to DNA damage sites. PARP1-mediated DNA repair in neurons plays a role in sleep: senses DNA damage in neurons and promotes sleep, facilitating efficient DNA repair. In addition to DNA repair, also involved in other processes, such as transcription regulation, programmed cell death, membrane repair, adipogenesis and innate immunity. Acts as a repressor of transcription: binds to nucleosomes and modulates chromatin structure in a manner similar to histone H1, thereby altering RNA polymerase II. Acts both as a positive and negative regulator of transcription elongation, depending on the context. Acts as a positive regulator of transcription elongation by mediating poly-ADP-ribosylation of NELFE, preventing RNA-binding activity of NELFE and relieving transcription pausing. Acts as a negative regulator of transcription elongation in response to DNA damage by catalyzing poly-ADP-ribosylation of CCNT1, disrupting the phase separation activity of CCNT1 and subsequent activation of CDK9. Involved in replication fork progression following interaction with CARM1: mediates poly-ADP-ribosylation at replication forks, slowing fork progression. Poly-ADP-ribose chains generated by PARP1 also play a role in poly-ADP-ribose-dependent cell death, a process named parthanatos. Also acts as a negative regulator of the cGAS-STING pathway. Acts by mediating poly-ADP-ribosylation of CGAS: PARP1 translocates into the cytosol following phosphorylation by PRKDC and catalyzes poly-ADP-ribosylation and inactivation of CGAS. Acts as a negative regulator of adipogenesis: catalyzes poly-ADP-ribosylation of histone H2B on 'Glu-35' (H2BE35ADPr) following interaction with NMNAT1, inhibiting phosphorylation of H2B at 'Ser-36' (H2BS36ph), thereby blocking expression of pro-adipogenetic genes. Involved in the synthesis of ATP in the nucleus, together with NMNAT1, PARG and NUDT5. Nuclear ATP generation is required for extensive chromatin remodeling events that are energy-consuming. Promotes AIFM1-mediated apoptosis. This form, which translocates into the cytoplasm following cleavage by caspase-3 (CASP3) and caspase-7 (CASP7) in response to apoptosis, is auto-poly-ADP-ribosylated and serves as a poly-ADP-ribose carrier to induce AIFM1-mediated apoptosis. In terms of biological role, this cleavage form irreversibly binds to DNA breaks and interferes with DNA repair, promoting DNA damage-induced apoptosis. The sequence is that of Poly [ADP-ribose] polymerase 1 (PARP1) from Bos taurus (Bovine).